Consider the following 183-residue polypeptide: SAGA-associated factor 11 homolog (183 aa).

The segment at 98-119 adopts an SGF11-type zinc-finger fold; it reads CSCPNCNRIVAASRFAPHLEKC. The disordered stretch occupies residues 140 to 167; sequence GGNYFGADEDDEDDADWSGEKRKKKIAP. The span at 146–156 shows a compositional bias: acidic residues; that stretch reads ADEDDEDDADW.

Belongs to the SGF11 family. In terms of assembly, component of some SAGA transcription coactivator-HAT complexes. Within the SAGA complex, participates in a subcomplex of SAGA called the DUB module (deubiquitination module).

Its subcellular location is the nucleus. Component of the transcription regulatory histone acetylation (HAT) complex SAGA, a multiprotein complex that activates transcription by remodeling chromatin and mediating histone acetylation and deubiquitination. Within the SAGA complex, participates in a subcomplex that specifically deubiquitinates histone H2B. The SAGA complex is recruited to specific gene promoters by activators, where it is required for transcription. The polypeptide is SAGA-associated factor 11 homolog (Culex quinquefasciatus (Southern house mosquito)).